The primary structure comprises 304 residues: UDP-3-O-acyl-N-acetylglucosamine deacetylase (304 aa).

Zn(2+) contacts are provided by His78, His237, and Asp241. The active-site Proton donor is His264.

This sequence belongs to the LpxC family. Zn(2+) serves as cofactor.

The catalysed reaction is a UDP-3-O-[(3R)-3-hydroxyacyl]-N-acetyl-alpha-D-glucosamine + H2O = a UDP-3-O-[(3R)-3-hydroxyacyl]-alpha-D-glucosamine + acetate. Its pathway is glycolipid biosynthesis; lipid IV(A) biosynthesis; lipid IV(A) from (3R)-3-hydroxytetradecanoyl-[acyl-carrier-protein] and UDP-N-acetyl-alpha-D-glucosamine: step 2/6. In terms of biological role, catalyzes the hydrolysis of UDP-3-O-myristoyl-N-acetylglucosamine to form UDP-3-O-myristoylglucosamine and acetate, the committed step in lipid A biosynthesis. In Legionella pneumophila (strain Paris), this protein is UDP-3-O-acyl-N-acetylglucosamine deacetylase.